We begin with the raw amino-acid sequence, 204 residues long: bMERB domain-containing protein 1 (204 aa).

In terms of domain architecture, bMERB spans 3-150; that stretch reads LKQSLSTHLE…EQEEDKEMAD (148 aa). The interval 162-187 is disordered; that stretch reads VTKSPASSRAEKKAEPPPSKPTVAKT.

The chain is bMERB domain-containing protein 1 from Homo sapiens (Human).